We begin with the raw amino-acid sequence, 80 residues long: U-poneritoxin(01)-Om3a (80 aa).

The N-terminal stretch at 1 to 25 is a signal peptide; the sequence is MKPSGLALAFLVVFMMAIMYNSVQA. Residues 26–39 constitute a propeptide that is removed on maturation; the sequence is AAIADADAEAEAIA.

This sequence belongs to the formicidae venom precursor-01 superfamily. In terms of processing, truncated sequences of this peptide have also been found in the venom. It is possible they have been cleaved in the venom. In terms of tissue distribution, expressed by the venom gland.

The protein localises to the secreted. Its function is as follows. Cationic amphipathic alpha-helical peptide with antimicrobial activities against E.coli (MIC=3.1 uM), S.aureus (MIC=25 uM), and S.cerevisiae (MIC=50 uM). Also shows histamine-releasing activity (37.5% at 10 uM). Does not show hemolytic activity, even at 50 uM. The protein is U-poneritoxin(01)-Om3a of Odontomachus monticola (Trap-jaw ant).